Reading from the N-terminus, the 475-residue chain is Putative amidase AmiD (475 aa).

Active-site charge relay system residues include Lys93 and Ser166. Catalysis depends on Ser190, which acts as the Acyl-ester intermediate.

Belongs to the amidase family.

The enzyme catalyses a monocarboxylic acid amide + H2O = a monocarboxylate + NH4(+). In Mycobacterium bovis (strain ATCC BAA-935 / AF2122/97), this protein is Putative amidase AmiD (amiD).